The following is a 101-amino-acid chain: Small ribosomal subunit protein uS14 (101 aa).

It belongs to the universal ribosomal protein uS14 family. In terms of assembly, part of the 30S ribosomal subunit. Contacts proteins S3 and S10.

Functionally, binds 16S rRNA, required for the assembly of 30S particles and may also be responsible for determining the conformation of the 16S rRNA at the A site. The sequence is that of Small ribosomal subunit protein uS14 from Shewanella sp. (strain ANA-3).